Reading from the N-terminus, the 247-residue chain is UPF0259 membrane protein BUsg_265 (247 aa).

Helical transmembrane passes span 20 to 40 (IKII…INVL), 82 to 102 (IFKI…IITL), 114 to 134 (IQFS…LNFI), 137 to 157 (FFIQ…SVLL), 188 to 208 (IVGT…TVFS), and 217 to 237 (FIFL…IVYL).

This sequence belongs to the UPF0259 family.

Its subcellular location is the cell membrane. This Buchnera aphidicola subsp. Schizaphis graminum (strain Sg) protein is UPF0259 membrane protein BUsg_265.